The sequence spans 94 residues: Small ribosomal subunit protein uS19 (94 aa).

It belongs to the universal ribosomal protein uS19 family.

In terms of biological role, protein S19 forms a complex with S13 that binds strongly to the 16S ribosomal RNA. The protein is Small ribosomal subunit protein uS19 of Hamiltonella defensa subsp. Acyrthosiphon pisum (strain 5AT).